A 121-amino-acid polypeptide reads, in one-letter code: Large ribosomal subunit protein uL18 (121 aa).

This sequence belongs to the universal ribosomal protein uL18 family. In terms of assembly, part of the 50S ribosomal subunit; part of the 5S rRNA/L5/L18/L25 subcomplex. Contacts the 5S and 23S rRNAs.

This is one of the proteins that bind and probably mediate the attachment of the 5S RNA into the large ribosomal subunit, where it forms part of the central protuberance. This chain is Large ribosomal subunit protein uL18, found in Spiroplasma kunkelii.